A 116-amino-acid polypeptide reads, in one-letter code: Proline-rich protein 9 (116 aa).

This Homo sapiens (Human) protein is Proline-rich protein 9 (PRR9).